A 288-amino-acid chain; its full sequence is MITYVFPGQGSQKQGMGSGLFDEFKELTDQADEILGYSIKRLCLENPYSNLNKTQFTQPALYVVNALSYLKKIRDEEVKPDFVAGHSLGEYNALFAAEAFDFETGLQLVRKRGELMSLISNGGMAAVMGLNEEQVAKALKEYHLHDVDIANVNAPYQIVISGKKDEIEKAASLFETMTEVTMVLPLNVSGAFHSRYMNKAKEEFEEFLHAFYFSPPSIPVISNVYAKPYTYEFMKQTLADQINHSVKWTDSISYLMKKGHMEFEEVGPGNVLTGLIHRIKKDAEAMPR.

Residues Ser-87 and His-193 contribute to the active site.

This sequence belongs to the FabD family.

It localises to the cytoplasm. It carries out the reaction holo-[ACP] + malonyl-CoA = malonyl-[ACP] + CoA. The protein operates within antibiotic biosynthesis; bacillaene biosynthesis. Its function is as follows. Involved in some intermediate steps for the synthesis of the antibiotic polyketide bacillaene which is involved in secondary metabolism. It catalyzes the transfer of the malonyl-CoA group to the acyl-carrier-protein AcpK (Mal-AcpK). This Bacillus subtilis (strain 168) protein is Polyketide biosynthesis malonyl CoA-acyl carrier protein transacylase PksC (pksC).